We begin with the raw amino-acid sequence, 170 residues long: ATP synthase subunit b (170 aa).

The chain crosses the membrane as a helical span at residues 22–41 (ILNWAVVVFGLYKFLPGFLG). The interval 76-98 (LSSAAEKASQIKADSLKRSESIR) is disordered. Positions 89-98 (DSLKRSESIR) are enriched in basic and acidic residues.

This sequence belongs to the ATPase B chain family. As to quaternary structure, F-type ATPases have 2 components, F(1) - the catalytic core - and F(0) - the membrane proton channel. F(1) has five subunits: alpha(3), beta(3), gamma(1), delta(1), epsilon(1). F(0) has four main subunits: a(1), b(1), b'(1) and c(10-14). The alpha and beta chains form an alternating ring which encloses part of the gamma chain. F(1) is attached to F(0) by a central stalk formed by the gamma and epsilon chains, while a peripheral stalk is formed by the delta, b and b' chains.

Its subcellular location is the cellular thylakoid membrane. Functionally, f(1)F(0) ATP synthase produces ATP from ADP in the presence of a proton or sodium gradient. F-type ATPases consist of two structural domains, F(1) containing the extramembraneous catalytic core and F(0) containing the membrane proton channel, linked together by a central stalk and a peripheral stalk. During catalysis, ATP synthesis in the catalytic domain of F(1) is coupled via a rotary mechanism of the central stalk subunits to proton translocation. Component of the F(0) channel, it forms part of the peripheral stalk, linking F(1) to F(0). This chain is ATP synthase subunit b, found in Prochlorococcus marinus (strain AS9601).